The chain runs to 151 residues: SsrA-binding protein (151 aa).

Belongs to the SmpB family.

It is found in the cytoplasm. Its function is as follows. Required for rescue of stalled ribosomes mediated by trans-translation. Binds to transfer-messenger RNA (tmRNA), required for stable association of tmRNA with ribosomes. tmRNA and SmpB together mimic tRNA shape, replacing the anticodon stem-loop with SmpB. tmRNA is encoded by the ssrA gene; the 2 termini fold to resemble tRNA(Ala) and it encodes a 'tag peptide', a short internal open reading frame. During trans-translation Ala-aminoacylated tmRNA acts like a tRNA, entering the A-site of stalled ribosomes, displacing the stalled mRNA. The ribosome then switches to translate the ORF on the tmRNA; the nascent peptide is terminated with the 'tag peptide' encoded by the tmRNA and targeted for degradation. The ribosome is freed to recommence translation, which seems to be the essential function of trans-translation. The chain is SsrA-binding protein from Lactobacillus acidophilus (strain ATCC 700396 / NCK56 / N2 / NCFM).